The following is a 283-amino-acid chain: ACT domain-containing protein DS12, chloroplastic (283 aa).

A chloroplast-targeting transit peptide spans 1 to 56; it reads MAEMAVTAALRPCSGVSPAVSGTSHRRRRPAAWRALAPPPPHAGLRLSSPAVRVPR. Residues 14–78 are disordered; it reads SGVSPAVSGT…SNTDTVPTPK (65 aa). The segment covering 48-63 has biased composition (low complexity); that stretch reads SSPAVRVPRAASSAAV. 2 consecutive ACT domains span residues 91–171 and 206–276; these read IVEI…ASSQ and LLVV…LRRP.

Its subcellular location is the plastid. The protein localises to the chloroplast. In Oryza sativa subsp. indica (Rice), this protein is ACT domain-containing protein DS12, chloroplastic.